The following is a 131-amino-acid chain: Phosphoribosyl-AMP cyclohydrolase (131 aa).

D78 contributes to the Mg(2+) binding site. C79 lines the Zn(2+) pocket. Mg(2+)-binding residues include D80 and D82. C96 and C103 together coordinate Zn(2+).

The protein belongs to the PRA-CH family. Homodimer. Requires Mg(2+) as cofactor. Zn(2+) is required as a cofactor.

It is found in the cytoplasm. The enzyme catalyses 1-(5-phospho-beta-D-ribosyl)-5'-AMP + H2O = 1-(5-phospho-beta-D-ribosyl)-5-[(5-phospho-beta-D-ribosylamino)methylideneamino]imidazole-4-carboxamide. Its pathway is amino-acid biosynthesis; L-histidine biosynthesis; L-histidine from 5-phospho-alpha-D-ribose 1-diphosphate: step 3/9. In terms of biological role, catalyzes the hydrolysis of the adenine ring of phosphoribosyl-AMP. In Neisseria meningitidis serogroup A / serotype 4A (strain DSM 15465 / Z2491), this protein is Phosphoribosyl-AMP cyclohydrolase.